The chain runs to 118 residues: MVHLTKTLRFINNPGFRKFYYGLQGYNKYGLYYDDFYDYTDPAHLEAVRRLPPDLYDQHTYRVIRASQLEITKQFLPKEQWPSYEEDMDKGRFLTPYLDEVMKEKKEKEEWVNFLSKD.

The segment at 1–32 (MVHLTKTLRFINNPGFRKFYYGLQGYNKYGLY) is igE-binding. Immunodominant epitope; induces specific IgE antibody production in mice. Causes degranulation of rat basophilic leukemia (RBL) cells and the release of beta-hexosaminidase from them.

It belongs to the UQCRB/QCR7 family. As to quaternary structure, component of the ubiquinol-cytochrome c oxidoreductase (cytochrome b-c1 complex, complex III, CIII), a multisubunit enzyme composed of 3 respiratory subunits cytochrome b, cytochrome c1 and Rieske protein, 2 core protein subunits, and additional low-molecular weight protein subunits. The complex exists as an obligatory dimer and forms supercomplexes (SCs) in the inner mitochondrial membrane with cytochrome c oxidase (complex IV, CIV).

The protein resides in the mitochondrion inner membrane. Its function is as follows. Component of the ubiquinol-cytochrome c oxidoreductase, a multisubunit transmembrane complex that is part of the mitochondrial electron transport chain which drives oxidative phosphorylation. The respiratory chain contains 3 multisubunit complexes succinate dehydrogenase (complex II, CII), ubiquinol-cytochrome c oxidoreductase (cytochrome b-c1 complex, complex III, CIII) and cytochrome c oxidase (complex IV, CIV), that cooperate to transfer electrons derived from NADH and succinate to molecular oxygen, creating an electrochemical gradient over the inner membrane that drives transmembrane transport and the ATP synthase. The cytochrome b-c1 complex catalyzes electron transfer from ubiquinol to cytochrome c, linking this redox reaction to translocation of protons across the mitochondrial inner membrane, with protons being carried across the membrane as hydrogens on the quinol. In the process called Q cycle, 2 protons are consumed from the matrix, 4 protons are released into the intermembrane space and 2 electrons are passed to cytochrome c. The chain is Cytochrome b-c1 complex subunit 7 from Dermatophagoides pteronyssinus (European house dust mite).